A 255-amino-acid chain; its full sequence is Uracil-DNA glycosylase (255 aa).

Residues 1–20 form a disordered region; that stretch reads MFSASTTPEQPLGLSGDATP. The active-site Proton acceptor is aspartate 99.

This sequence belongs to the uracil-DNA glycosylase (UDG) superfamily. UNG family.

It is found in the host nucleus. The catalysed reaction is Hydrolyzes single-stranded DNA or mismatched double-stranded DNA and polynucleotides, releasing free uracil.. Its function is as follows. Excises uracil residues from the DNA which can arise as a result of misincorporation of dUMP residues by DNA polymerase or deamination of cytosines. Therefore may reduce deleterious uracil incorporation into the viral genome, particularly in terminally differentiated cells which lack DNA repair enzymes. The chain is Uracil-DNA glycosylase from Human herpesvirus 2 (strain HG52) (HHV-2).